The chain runs to 776 residues: Reticulon-1 (776 aa).

Disordered stretches follow at residues 1–101, 137–168, 205–245, and 285–580; these read MAAP…KDGE, SESPEELGTPGPSLPDVPGIESRGLFSSDSGI, VKHQ…PAPV, and LTEI…APPP. S327 is modified (phosphoserine). Low complexity predominate over residues 328–341; sequence PGSITPPSSGTEPS. 3 positions are modified to phosphoserine: S350, S352, and S487. Residues 497-511 are compositionally biased toward basic and acidic residues; the sequence is AIREETGVRAEERAP. The region spanning 589–776 is the Reticulon domain; the sequence is AIDLLYWRDI…KIPGAKRHAE (188 aa). A run of 2 helical transmembrane segments spans residues 603-623 and 705-725; these read IVFGSFLLLLFSLTQFSVVSV and FAVLMWLLTYVGALFNGLTLL.

In terms of assembly, interacts with NDRG1. Interacts with BACE1. As to quaternary structure, interacts with TMEM33. Interacts with UGCG; regulates the ceramide glucosyltransferase activity of UGCG. Post-translationally, isoforms RTN1-A and RTN1-B are phosphorylated. In terms of tissue distribution, expressed in neural and neuroendocrine tissues and cell cultures derived therefrom. Expression of isoform RTN1-C is strongly correlated with neuronal differentiation.

The protein localises to the endoplasmic reticulum membrane. It is found in the golgi apparatus membrane. In terms of biological role, inhibits amyloid precursor protein processing, probably by blocking BACE1 activity. The sequence is that of Reticulon-1 (RTN1) from Homo sapiens (Human).